The chain runs to 391 residues: Multidrug resistance protein MdtL (391 aa).

12 consecutive transmembrane segments (helical) span residues 4-24, 42-62, 69-89, 93-113, 131-151, 158-178, 203-222, 245-265, 269-289, 293-313, 331-351, and 356-376; these read FLIC…MYLV, IAFS…GKVA, PVAI…SLAE, LFLA…VVAF, LLNG…HLIM, SLFW…LFIL, FFLS…LTFV, ALTA…LGIF, TLMI…AVSP, VSLF…GVAM, LGIA…VVGI, and MLIG…MFVA.

It belongs to the major facilitator superfamily. DHA1 family. MdtL (TC 2.A.1.2.22) subfamily.

It is found in the cell inner membrane. In terms of biological role, confers resistance to chloramphenicol. The protein is Multidrug resistance protein MdtL of Escherichia coli (strain SMS-3-5 / SECEC).